The sequence spans 154 residues: Large ribosomal subunit protein uL13 (154 aa).

It belongs to the universal ribosomal protein uL13 family. As to quaternary structure, part of the 50S ribosomal subunit.

Its function is as follows. This protein is one of the early assembly proteins of the 50S ribosomal subunit, although it is not seen to bind rRNA by itself. It is important during the early stages of 50S assembly. This Rhodospirillum rubrum (strain ATCC 11170 / ATH 1.1.1 / DSM 467 / LMG 4362 / NCIMB 8255 / S1) protein is Large ribosomal subunit protein uL13.